The chain runs to 88 residues: Small ribosomal subunit protein uS17 (88 aa).

Belongs to the universal ribosomal protein uS17 family. As to quaternary structure, part of the 30S ribosomal subunit.

Its function is as follows. One of the primary rRNA binding proteins, it binds specifically to the 5'-end of 16S ribosomal RNA. This chain is Small ribosomal subunit protein uS17, found in Brevibacillus brevis (strain 47 / JCM 6285 / NBRC 100599).